Consider the following 1087-residue polypeptide: 2'-5'-oligoadenylate synthase 3 (1087 aa).

Met1 is subject to N-acetylmethionine. The segment at 6–343 (TPAAALDRFV…GDPVQSWKGP (338 aa)) is OAS domain 1. Interaction with dsRNA stretches follow at residues 12-57 (DRFV…VLKT) and 186-200 (ELRR…AKLK). A linker region spans residues 344 to 410 (GLPRAGCSGL…VPGMALDLSQ (67 aa)). The residue at position 365 (Thr365) is a Phosphothreonine. 2 OAS domain regions span residues 411–742 (IPTK…PWDV) and 750–1084 (TPAG…WPVK). Ser804 contacts ATP. Positions 816, 818, and 888 each coordinate Mg(2+). ATP-binding residues include Arg947, Lys950, and Gln969.

It belongs to the 2-5A synthase family. Monomer. Mg(2+) serves as cofactor. Present at high level in placenta trophoblast.

It localises to the cytoplasm. The protein resides in the nucleus. The enzyme catalyses 3 ATP = 5'-triphosphoadenylyl-(2'-&gt;5')-adenylyl-(2'-&gt;5')-adenosine + 2 diphosphate. With respect to regulation, produced as a latent enzyme which is activated by dsRNA generated during the course of viral infection. Strongly activated by long dsRNAs at least 50 nucleotides in length. ssRNA does not activate the enzyme. In terms of biological role, interferon-induced, dsRNA-activated antiviral enzyme which plays a critical role in cellular innate antiviral response. In addition, it may also play a role in other cellular processes such as apoptosis, cell growth, differentiation and gene regulation. Synthesizes preferentially dimers of 2'-5'-oligoadenylates (2-5A) from ATP which then bind to the inactive monomeric form of ribonuclease L (RNase L) leading to its dimerization and subsequent activation. Activation of RNase L leads to degradation of cellular as well as viral RNA, resulting in the inhibition of protein synthesis, thus terminating viral replication. Can mediate the antiviral effect via the classical RNase L-dependent pathway or an alternative antiviral pathway independent of RNase L. Displays antiviral activity against Chikungunya virus (CHIKV), Dengue virus, Sindbis virus (SINV) and Semliki forest virus (SFV). The polypeptide is 2'-5'-oligoadenylate synthase 3 (OAS3) (Homo sapiens (Human)).